Here is a 283-residue protein sequence, read N- to C-terminus: Type III pantothenate kinase (283 aa).

Residue 9-16 (DIGNTRLK) coordinates ATP. Substrate contacts are provided by residues tyrosine 116 and 123 to 126 (GVDR). The active-site Proton acceptor is aspartate 125. Threonine 149 provides a ligand contact to ATP. A substrate-binding site is contributed by threonine 211.

Belongs to the type III pantothenate kinase family. In terms of assembly, homodimer. NH4(+) is required as a cofactor. It depends on K(+) as a cofactor.

Its subcellular location is the cytoplasm. It catalyses the reaction (R)-pantothenate + ATP = (R)-4'-phosphopantothenate + ADP + H(+). It functions in the pathway cofactor biosynthesis; coenzyme A biosynthesis; CoA from (R)-pantothenate: step 1/5. In terms of biological role, catalyzes the phosphorylation of pantothenate (Pan), the first step in CoA biosynthesis. The polypeptide is Type III pantothenate kinase (Cupriavidus taiwanensis (strain DSM 17343 / BCRC 17206 / CCUG 44338 / CIP 107171 / LMG 19424 / R1) (Ralstonia taiwanensis (strain LMG 19424))).